The chain runs to 335 residues: Phosphoserine phosphatase RsbU (335 aa).

In terms of domain architecture, PPM-type phosphatase spans 123-333 (DIGAISVPAK…DDFTLIVLRR (211 aa)).

The enzyme catalyses O-phospho-L-serine + H2O = L-serine + phosphate. The catalysed reaction is O-phospho-D-serine + H2O = D-serine + phosphate. With respect to regulation, stimulated by a long-lived interaction with RsbT. In terms of biological role, positive regulator of sigma-B activity. Dephosphorylates RsbV in response to environmental stress conveyed from the RsbXST module. The chain is Phosphoserine phosphatase RsbU (rsbU) from Bacillus subtilis (strain 168).